An 898-amino-acid polypeptide reads, in one-letter code: Protein SOV1, mitochondrial (898 aa).

Residues 1–31 constitute a mitochondrion transit peptide; that stretch reads MFKYNRSLCSSALIAKSQIRFYRLKRAPLNY.

It localises to the mitochondrion. This Saccharomyces cerevisiae (strain ATCC 204508 / S288c) (Baker's yeast) protein is Protein SOV1, mitochondrial (SOV1).